Consider the following 260-residue polypeptide: Thiazole synthase (260 aa).

The Schiff-base intermediate with DXP role is filled by Lys96. 1-deoxy-D-xylulose 5-phosphate is bound by residues Gly157, 184 to 185, and 206 to 207; these read AG and NT.

The protein belongs to the ThiG family. In terms of assembly, homotetramer. Forms heterodimers with either ThiH or ThiS.

The protein localises to the cytoplasm. The catalysed reaction is [ThiS sulfur-carrier protein]-C-terminal-Gly-aminoethanethioate + 2-iminoacetate + 1-deoxy-D-xylulose 5-phosphate = [ThiS sulfur-carrier protein]-C-terminal Gly-Gly + 2-[(2R,5Z)-2-carboxy-4-methylthiazol-5(2H)-ylidene]ethyl phosphate + 2 H2O + H(+). It functions in the pathway cofactor biosynthesis; thiamine diphosphate biosynthesis. Catalyzes the rearrangement of 1-deoxy-D-xylulose 5-phosphate (DXP) to produce the thiazole phosphate moiety of thiamine. Sulfur is provided by the thiocarboxylate moiety of the carrier protein ThiS. In vitro, sulfur can be provided by H(2)S. The chain is Thiazole synthase from Bradyrhizobium sp. (strain BTAi1 / ATCC BAA-1182).